Here is a 196-residue protein sequence, read N- to C-terminus: Alpha-crystallin A chain (196 aa).

At Met-1 the chain carries N-acetylmethionine. The tract at residues 1–63 is required for complex formation with BFSP1 and BFSP2; sequence MDVTIQHPWF…RTVLDSCISE (63 aa). Residue Gln-6 is modified to Deamidated glutamine; partial. The residue at position 45 (Ser-45) is a Phosphoserine. Position 50 is a deamidated glutamine; partial (Gln-50). The region spanning 76–185 is the sHSP domain; that stretch reads HAGNPENNPI…GHSERAIPVS (110 aa). 2 positions are modified to N6-acetyllysine: Lys-93 and Lys-122. His-123 is a binding site for Zn(2+). The residue at position 124 (Asn-124) is a Deamidated asparagine; partial. The Zn(2+) site is built by Glu-125 and His-130. Ser-145 carries the post-translational modification Phosphoserine. Position 170 is a deamidated glutamine; partial (Gln-170). Residues 170-196 form a disordered region; it reads QSGLDAGHSERAIPVSQEEKPSSAPLF. The span at 176-190 shows a compositional bias: basic and acidic residues; the sequence is GHSERAIPVSQEEKP. His-177 provides a ligand contact to Zn(2+). Ser-185 carries O-linked (GlcNAc) serine glycosylation.

The protein belongs to the small heat shock protein (HSP20) family. As to quaternary structure, heteromer composed of three CRYAA and one CRYAB subunits. Inter-subunit bridging via zinc ions enhances stability, which is crucial as there is no protein turn over in the lens. Can also form homodimers and homotetramers (dimers of dimers) which serve as the building blocks of homooligomers. Within homooligomers, the zinc-binding motif is created from residues of 3 different molecules. His-123 and Glu-125 from one molecule are ligands of the zinc ion, and His-130 and His-177 residues from additional molecules complete the site with tetrahedral coordination geometry. Part of a complex required for lens intermediate filament formation composed of BFSP1, BFSP2 and CRYAA. Acetylation at Lys-93 may increase chaperone activity. Post-translationally, undergoes age-dependent proteolytical cleavage at the C-terminus.

It is found in the cytoplasm. The protein resides in the nucleus. Its function is as follows. Contributes to the transparency and refractive index of the lens. Acts as a chaperone, preventing aggregation of various proteins under a wide range of stress conditions. Required for the correct formation of lens intermediate filaments as part of a complex composed of BFSP1, BFSP2 and CRYAA. The protein is Alpha-crystallin A chain (CRYAA) of Spalax ehrenbergi (Middle East blind mole rat).